The chain runs to 212 residues: Large ribosomal subunit protein uL3 (212 aa).

Q153 is modified (N5-methylglutamine).

Belongs to the universal ribosomal protein uL3 family. Part of the 50S ribosomal subunit. Forms a cluster with proteins L14 and L19. Post-translationally, methylated by PrmB.

One of the primary rRNA binding proteins, it binds directly near the 3'-end of the 23S rRNA, where it nucleates assembly of the 50S subunit. This Shewanella pealeana (strain ATCC 700345 / ANG-SQ1) protein is Large ribosomal subunit protein uL3.